The chain runs to 34 residues: Photosystem II reaction center protein M (34 aa).

Residues 6-26 form a helical membrane-spanning segment; it reads LGAIATALFVFIPCVFLILLY.

Belongs to the PsbM family. PSII is composed of 1 copy each of membrane proteins PsbA, PsbB, PsbC, PsbD, PsbE, PsbF, PsbH, PsbI, PsbJ, PsbK, PsbL, PsbM, PsbT, PsbX, PsbY, PsbZ, Psb30/Ycf12, peripheral proteins PsbO, CyanoQ (PsbQ), PsbU, PsbV and a large number of cofactors. It forms dimeric complexes.

Its subcellular location is the cellular thylakoid membrane. One of the components of the core complex of photosystem II (PSII). PSII is a light-driven water:plastoquinone oxidoreductase that uses light energy to abstract electrons from H(2)O, generating O(2) and a proton gradient subsequently used for ATP formation. It consists of a core antenna complex that captures photons, and an electron transfer chain that converts photonic excitation into a charge separation. This subunit is found at the monomer-monomer interface. This Acaryochloris marina (strain MBIC 11017) protein is Photosystem II reaction center protein M.